The primary structure comprises 93 residues: MASEIIVDHQQKAFELLKLDAEKILKLIRVQMDNLTMPQCPLYEEVLDTQMFGLSREIDFAVRLGLVDENDGKELLDRLERELSALHDAFTGK.

This sequence belongs to the UPF0358 family.

In Bacillus velezensis (strain DSM 23117 / BGSC 10A6 / LMG 26770 / FZB42) (Bacillus amyloliquefaciens subsp. plantarum), this protein is UPF0358 protein RBAM_014700.